Reading from the N-terminus, the 175-residue chain is RNA pyrophosphohydrolase (175 aa).

The 144-residue stretch at 6 to 149 (GYRPNVGIVI…KRDVYRRVMK (144 aa)) folds into the Nudix hydrolase domain. The short motif at 38-59 (GGINPGETPEQAMYRELFEEVG) is the Nudix box element.

The protein belongs to the Nudix hydrolase family. RppH subfamily. A divalent metal cation serves as cofactor.

Functionally, accelerates the degradation of transcripts by removing pyrophosphate from the 5'-end of triphosphorylated RNA, leading to a more labile monophosphorylated state that can stimulate subsequent ribonuclease cleavage. The sequence is that of RNA pyrophosphohydrolase from Yersinia enterocolitica serotype O:8 / biotype 1B (strain NCTC 13174 / 8081).